A 1044-amino-acid chain; its full sequence is Integrin alpha-8 (1044 aa).

Residues 1–23 (MPRRQPPRPLLLLSALLCAPASA) form the signal peptide. Residues 24–991 (FNLDEEKLTV…WSTPNVSFVI (968 aa)) are Extracellular-facing. FG-GAP repeat units lie at residues 28 to 90 (EEKL…RCRQ), 104 to 165 (NGTR…AYAE), 170 to 222 (RNSN…ITNY), 236 to 288 (QTGV…SSDL), 289 to 354 (TFIQ…FLFR), 355 to 413 (DPQI…GLKT), and 417 to 480 (QVLN…LNPM). Asn-66 carries an N-linked (GlcNAc...) asparagine glycan. The cysteines at positions 81 and 88 are disulfide-linked. Asn-104 is a glycosylation site (N-linked (GlcNAc...) asparagine). A disulfide bond links Cys-132 and Cys-153. Asn-159 carries an N-linked (GlcNAc...) asparagine glycan. A disulfide bridge connects residues Cys-169 and Cys-182. An N-linked (GlcNAc...) asparagine glycan is attached at Asn-221. Ca(2+) is bound by residues Glu-257, Thr-259, Asp-261, and Glu-265. Residues Asn-284 and Asn-293 are each glycosylated (N-linked (GlcNAc...) asparagine). Ca(2+) contacts are provided by Asp-311, Asn-313, Asp-315, Leu-317, Asp-319, Asp-377, Asn-379, Asp-381, Tyr-383, and Asp-385. Residues 437–439 (RGD) carry the Cell attachment site motif. Asp-441, Asp-443, Asn-445, Tyr-447, and Asp-449 together coordinate Ca(2+). The N-linked (GlcNAc...) asparagine glycan is linked to Asn-486. 2 disulfide bridges follow: Cys-489-Cys-500 and Cys-506-Cys-562. An N-linked (GlcNAc...) asparagine glycan is attached at Asn-587. Disulfide bonds link Cys-623–Cys-629 and Cys-695–Cys-708. Residues Asn-701, Asn-719, Asn-751, Asn-762, Asn-818, Asn-877, and Asn-904 are each glycosylated (N-linked (GlcNAc...) asparagine). Intrachain disulfides connect Cys-849–Cys-905 and Cys-910–Cys-915. 2 N-linked (GlcNAc...) asparagine glycosylation sites follow: Asn-952 and Asn-986. Residues 992 to 1015 (PLWVIILAIMLGLLVLAVLTLALW) form a helical membrane-spanning segment. Residues 1016-1044 (KCGFFDRARPPQDDMADREQLTNNKTTDA) are Cytoplasmic-facing.

It belongs to the integrin alpha chain family. Heterodimer of an alpha and a beta subunit. The alpha subunit is composed of a heavy and a light chain linked by a disulfide bond. Alpha-8 associates with beta-1. In terms of tissue distribution, prominently expressed on axons and on cells in contact with basal laminae in embryos.

Its subcellular location is the membrane. It is found in the cell membrane. In terms of biological role, integrin alpha-8/beta-1 functions in the genesis of kidney and probably of other organs by regulating the recruitment of mesenchymal cells into epithelial structures. It recognizes the sequence R-G-D in a wide array of ligands including TNC, FN1, SPP1, TGFB1, TGFB3 and VTN. NPNT is probably its functional ligand in kidney genesis. Neuronal receptor for TNC it mediates cell-cell interactions and regulates neurite outgrowth of sensory and motor neurons. In Gallus gallus (Chicken), this protein is Integrin alpha-8 (ITGA8).